We begin with the raw amino-acid sequence, 224 residues long: Flagellar L-ring protein (224 aa).

An N-terminal signal peptide occupies residues 1–15 (MARYLVLAVALLLAA). A lipid anchor (N-palmitoyl cysteine) is attached at cysteine 16. Cysteine 16 is lipidated: S-diacylglycerol cysteine.

Belongs to the FlgH family. In terms of assembly, the basal body constitutes a major portion of the flagellar organelle and consists of four rings (L,P,S, and M) mounted on a central rod.

The protein localises to the cell outer membrane. The protein resides in the bacterial flagellum basal body. Assembles around the rod to form the L-ring and probably protects the motor/basal body from shearing forces during rotation. This chain is Flagellar L-ring protein, found in Shewanella baltica (strain OS185).